A 793-amino-acid polypeptide reads, in one-letter code: DnaJ homolog subfamily C member 10 (793 aa).

An N-terminal signal peptide occupies residues 1-32 (MGVWLNKDDYIRDLKRIILCFLIVYMAILVGT). A J domain is found at 35–100 (DFYSLLGVSK…DLRKKYDKYG (66 aa)). The Thioredoxin 1 domain occupies 130 to 232 (EIITLERREF…ESLVSFAMQH (103 aa)). A disulfide bond links C158 and C161. 2 trxb regions span residues 235–350 (STVT…LPDF) and 348–463 (PDFE…PQNF). 3 consecutive Thioredoxin domains span residues 454-553 (HVTT…IEDL), 557-662 (SVVS…SLRI), and 671-778 (VSTD…ISEK). Residues C480 and C483 are joined by a disulfide bond. N530 carries N-linked (GlcNAc...) asparagine glycosylation. Disulfide bonds link C588/C591 and C700/C703. Residues 790–793 (KDEL) carry the Prevents secretion from ER motif.

In terms of assembly, interacts with EDEM1. Interacts with HSPA5 (via its J domain).

It localises to the endoplasmic reticulum lumen. Its function is as follows. Endoplasmic reticulum disulfide reductase involved both in the correct folding of proteins and degradation of misfolded proteins. Required for efficient folding of proteins in the endoplasmic reticulum by catalyzing the removal of non-native disulfide bonds formed during the folding of proteins, such as LDLR. Also involved in endoplasmic reticulum-associated degradation (ERAD) by reducing incorrect disulfide bonds in misfolded glycoproteins recognized by EDEM1. Interaction with HSPA5 is required its activity, not for the disulfide reductase activity, but to facilitate the release of DNAJC10 from its substrate. Promotes apoptotic signaling pathway in response to endoplasmic reticulum stress. This is DnaJ homolog subfamily C member 10 (DNAJC10) from Homo sapiens (Human).